The sequence spans 137 residues: NADPH-dependent 7-cyano-7-deazaguanine reductase (137 aa).

The active-site Thioimide intermediate is the cysteine 50. The active-site Proton donor is aspartate 57. Residues 72–74 (VEL) and 91–92 (HE) contribute to the substrate site.

It belongs to the GTP cyclohydrolase I family. QueF type 1 subfamily.

The protein localises to the cytoplasm. The enzyme catalyses 7-aminomethyl-7-carbaguanine + 2 NADP(+) = 7-cyano-7-deazaguanine + 2 NADPH + 3 H(+). It functions in the pathway tRNA modification; tRNA-queuosine biosynthesis. Functionally, catalyzes the NADPH-dependent reduction of 7-cyano-7-deazaguanine (preQ0) to 7-aminomethyl-7-deazaguanine (preQ1). The polypeptide is NADPH-dependent 7-cyano-7-deazaguanine reductase (Synechocystis sp. (strain ATCC 27184 / PCC 6803 / Kazusa)).